The primary structure comprises 284 residues: Probable plastid-lipid-associated protein 10, chloroplastic (284 aa).

The transit peptide at 1–40 directs the protein to the chloroplast; that stretch reads MDRIASATFSCPAISLSRVCRISPFGLNIKTNHRKRFSCR.

It belongs to the PAP/fibrillin family.

The protein localises to the plastid. Its subcellular location is the chloroplast. It is found in the plastoglobule. The polypeptide is Probable plastid-lipid-associated protein 10, chloroplastic (PAP10) (Arabidopsis thaliana (Mouse-ear cress)).